Here is a 578-residue protein sequence, read N- to C-terminus: Zinc finger protein with KRAB and SCAN domains 8 (578 aa).

Residues 1-20 form a disordered region; the sequence is MAEESRKPSAPSPPDQTPEE. Position 12 is a phosphoserine (serine 12). Lysine 26 participates in a covalent cross-link: Glycyl lysine isopeptide (Lys-Gly) (interchain with G-Cter in SUMO2). An SCAN box domain is found at 51–133; the sequence is RLRFRQLCYQ…TLLEDLERQI (83 aa). Positions 158–205 are disordered; that stretch reads ASAPEPPNTQLQSEATQHKSPVPQESQERAMSTSQSPTRSQKGSSGDQ. The segment covering 165-205 has biased composition (polar residues); that stretch reads NTQLQSEATQHKSPVPQESQERAMSTSQSPTRSQKGSSGDQ. Residues lysine 176 and lysine 199 each participate in a glycyl lysine isopeptide (Lys-Gly) (interchain with G-Cter in SUMO2) cross-link. Serine 201 bears the Phosphoserine mark. Residues 220-316 form the KRAB domain; the sequence is EKIEDMAVSL…GRLERQRGNP (97 aa). Glycyl lysine isopeptide (Lys-Gly) (interchain with G-Cter in SUMO2) cross-links involve residues lysine 221, lysine 272, and lysine 288. 2 consecutive C2H2-type zinc fingers follow at residues 322–344 and 350–372; these read HKCDECGKSFAQSSGLVRHWRIH and YQCNVCGKAFSYRSALLSHQDIH. Residues lysine 374 and lysine 376 each participate in a glycyl lysine isopeptide (Lys-Gly) (interchain with G-Cter in SUMO2) cross-link. 7 consecutive C2H2-type zinc fingers follow at residues 378-400, 406-428, 434-456, 462-484, 490-512, 518-540, and 546-568; these read YHCKECGKAFSQNTGLILHQRIH, YQCNQCGKAFSQSAGLILHQRIH, YECNECGKAFSHSSHLIGHQRIH, YECDECGKTFRRSSHLIGHQRSH, YKCNECGRAFSQKSGLIEHQRIH, YKCKECGKAFNGNTGLIQHLRIH, and YQCNECGKAFIQRSSLIRHQRIH. Glycyl lysine isopeptide (Lys-Gly) (interchain with G-Cter in SUMO2) cross-links involve residues lysine 413 and lysine 441. A Glycyl lysine isopeptide (Lys-Gly) (interchain with G-Cter in SUMO2) cross-link involves residue lysine 502. Residue lysine 572 forms a Glycyl lysine isopeptide (Lys-Gly) (interchain with G-Cter in SUMO2) linkage.

This sequence belongs to the krueppel C2H2-type zinc-finger protein family.

It localises to the nucleus. In terms of biological role, may be involved in transcriptional regulation. The sequence is that of Zinc finger protein with KRAB and SCAN domains 8 (ZKSCAN8) from Pan troglodytes (Chimpanzee).